Reading from the N-terminus, the 601-residue chain is Glutathione-regulated potassium-efflux system protein KefB (601 aa).

Transmembrane regions (helical) follow at residues 4 to 24 (SDLL…VPLA), 29 to 49 (IGAV…GLGF), 55 to 75 (EILH…GLEL), 87 to 107 (IFGV…GLLM), 115 to 135 (AAVV…LQLM), 152 to 172 (VLLF…LLAG), 177 to 197 (HVNW…LIGG), 207 to 227 (FIAS…LVLG), 230 to 250 (LFME…GVLL), 268 to 288 (GLLL…GVLY), 291 to 311 (LLWV…VLYL), 326 to 346 (FAGV…LPAS), and 356 to 376 (ALLL…MKGI). The RCK N-terminal domain maps to 400-519 (KPQVIIVGFG…AGVTQFSRET (120 aa)).

It belongs to the monovalent cation:proton antiporter 2 (CPA2) transporter (TC 2.A.37) family. KefB subfamily. As to quaternary structure, interacts with the regulatory subunit KefG.

It is found in the cell inner membrane. Functionally, pore-forming subunit of a potassium efflux system that confers protection against electrophiles. Catalyzes K(+)/H(+) antiport. This is Glutathione-regulated potassium-efflux system protein KefB from Klebsiella pneumoniae (strain 342).